A 391-amino-acid polypeptide reads, in one-letter code: Small ribosomal subunit protein bS1 (391 aa).

4 consecutive S1 motif domains span residues 16-90, 108-173, 194-262, and 279-348; these read GDKV…LSRR, NEII…LSRK, GDVI…LSIK, and NDVI…LSIK.

Belongs to the bacterial ribosomal protein bS1 family.

Functionally, binds mRNA; thus facilitating recognition of the initiation point. It is needed to translate mRNA with a short Shine-Dalgarno (SD) purine-rich sequence. The protein is Small ribosomal subunit protein bS1 (rpsA) of Staphylococcus aureus (strain MSSA476).